The primary structure comprises 100 residues: MHLTSREQEKLMLFLAGELAAKRKARGVKLNYPETVAYIASHLQEAARDGVSVAEVMQYGSTLLTVDDVMEGVAEMVHEVQIEATFPDGTKLVTVHNPIR.

The protein belongs to the urease gamma subunit family. In terms of assembly, heterotrimer of UreA (gamma), UreB (beta) and UreC (alpha) subunits. Three heterotrimers associate to form the active enzyme.

It is found in the cytoplasm. It catalyses the reaction urea + 2 H2O + H(+) = hydrogencarbonate + 2 NH4(+). The protein operates within nitrogen metabolism; urea degradation; CO(2) and NH(3) from urea (urease route): step 1/1. This is Urease subunit gamma from Haemophilus influenzae (strain PittGG).